We begin with the raw amino-acid sequence, 78 residues long: UPF0369 protein RP167 (78 aa).

The protein belongs to the SDHAF4 family.

The protein is UPF0369 protein RP167 of Rickettsia prowazekii (strain Madrid E).